Here is a 214-residue protein sequence, read N- to C-terminus: ATP phosphoribosyltransferase (214 aa).

It belongs to the ATP phosphoribosyltransferase family. Short subfamily. As to quaternary structure, heteromultimer composed of HisG and HisZ subunits.

The protein resides in the cytoplasm. The catalysed reaction is 1-(5-phospho-beta-D-ribosyl)-ATP + diphosphate = 5-phospho-alpha-D-ribose 1-diphosphate + ATP. The protein operates within amino-acid biosynthesis; L-histidine biosynthesis; L-histidine from 5-phospho-alpha-D-ribose 1-diphosphate: step 1/9. In terms of biological role, catalyzes the condensation of ATP and 5-phosphoribose 1-diphosphate to form N'-(5'-phosphoribosyl)-ATP (PR-ATP). Has a crucial role in the pathway because the rate of histidine biosynthesis seems to be controlled primarily by regulation of HisG enzymatic activity. The sequence is that of ATP phosphoribosyltransferase from Streptococcus sanguinis (strain SK36).